A 1832-amino-acid chain; its full sequence is Putative transcription factor capicua (1832 aa).

Phosphoserine occurs at positions 41 and 49. Disordered stretches follow at residues 66–121, 135–227, 323–353, 389–427, 444–493, 563–619, 690–739, 784–845, 874–938, 1069–1105, 1151–1178, 1457–1602, 1632–1668, 1701–1733, and 1789–1817; these read ANQS…EVGS, STVG…AHPH, QQQQ…NHNN, NQRQ…AAMR, DGAA…IRRP, DRRK…GGQG, RERV…SGGE, QPTG…VSAP, PMHH…EDDE, TSTL…TISC, GQDE…EQVT, DGGM…STAA, QPED…VQKL, LESS…HRKV, and ASCT…SSTS. Residues 96–121 are compositionally biased toward low complexity; sequence NANNNSSNNNTSSSNNNNNSNWEVGS. The segment covering 172-186 has biased composition (pro residues); that stretch reads PPPPPPASLPAPSAP. Composition is skewed to low complexity over residues 187–203, 211–223, and 323–342; these read PTSG…HATS, QQQH…HQQQ, and QQQQ…QQQQ. Residues 397–408 show a composition bias toward acidic residues; it reads EEPDDQLDDDVF. A compositionally biased stretch (polar residues) spans 409 to 422; the sequence is ETTTPGISANSKKQ. A compositionally biased stretch (low complexity) spans 446-484; it reads AAGAPATSAAKRRSQSLSALQQQQQQQQQAGAAGTAAGQ. The HMG box DNA-binding region spans 490 to 558; the sequence is IRRPMNAFMI…AHFKLHPEWK (69 aa). The segment covering 610-619 has biased composition (gly residues); that stretch reads GGSGSCGGQG. Residues 834 to 1832 form an interaction with gro region; that stretch reads GSASGGGVVS…TSAADVFQYY (999 aa). Residues 903–914 are compositionally biased toward basic and acidic residues; that stretch reads ESSEKDKPALDD. Acidic residues predominate over residues 915 to 938; the sequence is QERDEVEEEDEDEEDDDEDDEDDE. Positions 1078-1091 are enriched in polar residues; that stretch reads NPANNEAPNKFSNF. Over residues 1092-1105 the composition is skewed to low complexity; sequence PTQHQPTTTTTISC. The segment covering 1462–1471 has biased composition (low complexity); that stretch reads GCASAAASGG. Over residues 1503–1525 the composition is skewed to polar residues; the sequence is LSQSKSESNVSFGANLGASNGQH. Low complexity predominate over residues 1547–1589; the sequence is NSSNLSSALPTPTSSTTTPNSDEQLPLTPTTSSSNSNLNQQQP. Thr-1716 carries the phosphothreonine modification. Residues 1724–1733 are compositionally biased toward basic and acidic residues; the sequence is DASEKGHRKV. Residues 1789–1799 show a composition bias toward polar residues; it reads ASCTPHSAGPN. The span at 1800–1817 shows a compositional bias: low complexity; sequence TPSDSNSSSTTLSASSTS.

Interacts with gro. Expressed in the central region of embryos. Also expressed in ovarian follicle cells, the wing imaginal disks and the wing pouch.

It is found in the nucleus. Functionally, transcriptional repressor required for the specification of numerous cell types during embryonic development. Required for terminal patterning of early embryos. May associate with gro to repress tll and hkb, restricting their expression to embryonic terminal poles where they initiate correct development of head and tail structures. Required for dorsoventral patterning of oocytes and early embryos. Cooperates with dl to repress zen and other dorsal specific genes within the embryo and promotes expression of the ventralizing factor pip in ovarian follicle cells. Required during wing development for the specification of intervein areas, where it mediates localized repression of vein specific genes such as aos, dpp and vvl. The sequence is that of Putative transcription factor capicua (cic) from Drosophila melanogaster (Fruit fly).